Reading from the N-terminus, the 472-residue chain is Siroheme synthase 1 (472 aa).

The precorrin-2 dehydrogenase /sirohydrochlorin ferrochelatase stretch occupies residues 1–203; it reads MDYLPLFADL…GQLAQAEEEL (203 aa). NAD(+) contacts are provided by residues 22-23 and 43-44; these read EV and QT. Ser128 bears the Phosphoserine mark. The uroporphyrinogen-III C-methyltransferase stretch occupies residues 215–472; the sequence is GEVALVGAGP…AISPSVVNLA (258 aa). Residue Pro224 coordinates S-adenosyl-L-methionine. The active-site Proton acceptor is the Asp247. The Proton donor role is filled by Lys269. S-adenosyl-L-methionine-binding positions include 300–302, Ile305, 330–331, Met382, and Gly411; these read GGD and TA.

In the N-terminal section; belongs to the precorrin-2 dehydrogenase / sirohydrochlorin ferrochelatase family. This sequence in the C-terminal section; belongs to the precorrin methyltransferase family.

The catalysed reaction is uroporphyrinogen III + 2 S-adenosyl-L-methionine = precorrin-2 + 2 S-adenosyl-L-homocysteine + H(+). The enzyme catalyses precorrin-2 + NAD(+) = sirohydrochlorin + NADH + 2 H(+). It carries out the reaction siroheme + 2 H(+) = sirohydrochlorin + Fe(2+). It functions in the pathway cofactor biosynthesis; adenosylcobalamin biosynthesis; precorrin-2 from uroporphyrinogen III: step 1/1. It participates in cofactor biosynthesis; adenosylcobalamin biosynthesis; sirohydrochlorin from precorrin-2: step 1/1. Its pathway is porphyrin-containing compound metabolism; siroheme biosynthesis; precorrin-2 from uroporphyrinogen III: step 1/1. The protein operates within porphyrin-containing compound metabolism; siroheme biosynthesis; siroheme from sirohydrochlorin: step 1/1. It functions in the pathway porphyrin-containing compound metabolism; siroheme biosynthesis; sirohydrochlorin from precorrin-2: step 1/1. Functionally, multifunctional enzyme that catalyzes the SAM-dependent methylations of uroporphyrinogen III at position C-2 and C-7 to form precorrin-2 via precorrin-1. Then it catalyzes the NAD-dependent ring dehydrogenation of precorrin-2 to yield sirohydrochlorin. Finally, it catalyzes the ferrochelation of sirohydrochlorin to yield siroheme. The chain is Siroheme synthase 1 from Yersinia enterocolitica serotype O:8 / biotype 1B (strain NCTC 13174 / 8081).